A 539-amino-acid chain; its full sequence is Probable glycerol kinase (539 aa).

Thr-12 provides a ligand contact to substrate. Arg-16 serves as a coordination point for ATP. Positions 86, 168, and 285 each coordinate substrate. ATP-binding positions include Thr-307, Gly-352, and Gly-453 to Asn-457.

The protein belongs to the FGGY kinase family.

The catalysed reaction is glycerol + ATP = sn-glycerol 3-phosphate + ADP + H(+). It participates in polyol metabolism; glycerol degradation via glycerol kinase pathway; sn-glycerol 3-phosphate from glycerol: step 1/1. The protein is Probable glycerol kinase (gk) of Dictyostelium discoideum (Social amoeba).